The sequence spans 315 residues: MRMSFGLTFKRTAKVHWRANFSQQCSLRSTGLFVPPSPPLDPEKVKELQRFITLSKRLLVMTGAGISTESGIPDYRSEKVGLYARTDRRPIQHGDFVRSAPVRQRYWARNFVGWPQFSSRQPNPAHWALSNWERLGKLHWLVTQNVDALHTKAGSQRLTELHGCMHRVLCLDCGEQTPRGVLQERFQVLNPTWSAEAHGLAPDGDVFLTEEEVQSFQVPSCSRCGGPLKPDVVFFGDTVKPDKVDFVHKRVKEADSLLVVGSSLQVYSGYRFILTAREKKLPIVILNIGPTRSDDLASLKLDSRCGELLPLIDPR.

A mitochondrion-targeting transit peptide spans Met1 to Ser29. The 278-residue stretch at Pro38–Arg315 folds into the Deacetylase sirtuin-type domain. Residues Gly63–Tyr83 and Gln144–Asp147 contribute to the NAD(+) site. Catalysis depends on His162, which acts as the Proton acceptor. Zn(2+) contacts are provided by Cys170, Cys173, Cys221, and Cys224. NAD(+) contacts are provided by residues Gly261–Ser263, Asn287–Gly289, and Cys305.

The protein belongs to the sirtuin family. Class II subfamily. As to quaternary structure, interacts with GLUD1, IDE and SLC25A5. Interacts with DLAT and PDHX. Interacts with MCCC1 (via the biotin carboxylation domain). Interacts with PCCA and PC. Zn(2+) is required as a cofactor.

The protein localises to the mitochondrion matrix. The catalysed reaction is N(6)-[(R)-lipoyl]-L-lysyl-[protein] + NAD(+) + H2O = 2''-O-lipoyl-ADP-D-ribose + nicotinamide + L-lysyl-[protein]. The enzyme catalyses N(6)-biotinyl-L-lysyl-[protein] + NAD(+) + H2O = 2''-O-biotinyl-ADP-D-ribose + nicotinamide + L-lysyl-[protein]. It catalyses the reaction N(6)-acetyl-L-lysyl-[protein] + NAD(+) + H2O = 2''-O-acetyl-ADP-D-ribose + nicotinamide + L-lysyl-[protein]. It carries out the reaction L-cysteinyl-[protein] + NAD(+) = S-(ADP-D-ribosyl)-L-cysteinyl-[protein] + nicotinamide + H(+). Its function is as follows. Acts as a NAD-dependent protein lipoamidase, biotinylase, deacetylase and ADP-ribosyl transferase. Catalyzes more efficiently removal of lipoyl- and biotinyl- than acetyl-lysine modifications. Inhibits the pyruvate dehydrogenase complex (PDH) activity via the enzymatic hydrolysis of the lipoamide cofactor from the E2 component, DLAT, in a phosphorylation-independent manner. Catalyzes the transfer of ADP-ribosyl groups onto target proteins, including mitochondrial GLUD1, inhibiting GLUD1 enzyme activity. Acts as a negative regulator of mitochondrial glutamine metabolism by mediating mono ADP-ribosylation of GLUD1: expressed in response to DNA damage and negatively regulates anaplerosis by inhibiting GLUD1, leading to block metabolism of glutamine into tricarboxylic acid cycle and promoting cell cycle arrest. In response to mTORC1 signal, SIRT4 expression is repressed, promoting anaplerosis and cell proliferation. Acts as a tumor suppressor. Also acts as a NAD-dependent protein deacetylase: mediates deacetylation of 'Lys-471' of MLYCD, inhibiting its activity, thereby acting as a regulator of lipid homeostasis. Does not seem to deacetylate PC. Controls fatty acid oxidation by inhibiting PPARA transcriptional activation. Impairs SIRT1-PPARA interaction probably through the regulation of NAD(+) levels. Down-regulates insulin secretion. The protein is NAD-dependent protein lipoamidase sirtuin-4, mitochondrial of Bos taurus (Bovine).